Here is a 313-residue protein sequence, read N- to C-terminus: Recombination-promoting nuclease pSLT051 (313 aa).

It belongs to the Rpn/YhgA-like nuclease family.

Functionally, a low activity DNA endonuclease probably yielding 3'-hydroxyl ends. Involved in RecA-independent recombination and horizontal gene transfer. The sequence is that of Recombination-promoting nuclease pSLT051 from Salmonella typhimurium (strain LT2 / SGSC1412 / ATCC 700720).